The chain runs to 504 residues: ATP synthase subunit alpha (504 aa).

170–177 provides a ligand contact to ATP; sequence GDRQTGKT.

It belongs to the ATPase alpha/beta chains family. In terms of assembly, F-type ATPases have 2 components, CF(1) - the catalytic core - and CF(0) - the membrane proton channel. CF(1) has five subunits: alpha(3), beta(3), gamma(1), delta(1), epsilon(1). CF(0) has four main subunits: a(1), b(1), b'(1) and c(9-12).

It localises to the cellular thylakoid membrane. The enzyme catalyses ATP + H2O + 4 H(+)(in) = ADP + phosphate + 5 H(+)(out). In terms of biological role, produces ATP from ADP in the presence of a proton gradient across the membrane. The alpha chain is a regulatory subunit. This chain is ATP synthase subunit alpha, found in Prochlorococcus marinus (strain NATL2A).